The chain runs to 360 residues: Phospho-N-acetylmuramoyl-pentapeptide-transferase (360 aa).

10 helical membrane-spanning segments follow: residues 27–47 (GAVM…IEWL), 73–93 (TMGG…WADL), 98–118 (VWAV…DDYL), 134–154 (LVAQ…LGQG), 168–188 (LTFN…VGAS), 199–219 (GLAI…AYLV), 239–259 (LAVF…FNAP), 263–283 (VFMG…VSVV), 288–308 (IVLA…IVQV), and 337–357 (TVVI…LSTL).

It belongs to the glycosyltransferase 4 family. MraY subfamily. The cofactor is Mg(2+).

Its subcellular location is the cell inner membrane. It catalyses the reaction UDP-N-acetyl-alpha-D-muramoyl-L-alanyl-gamma-D-glutamyl-meso-2,6-diaminopimeloyl-D-alanyl-D-alanine + di-trans,octa-cis-undecaprenyl phosphate = di-trans,octa-cis-undecaprenyl diphospho-N-acetyl-alpha-D-muramoyl-L-alanyl-D-glutamyl-meso-2,6-diaminopimeloyl-D-alanyl-D-alanine + UMP. It functions in the pathway cell wall biogenesis; peptidoglycan biosynthesis. Catalyzes the initial step of the lipid cycle reactions in the biosynthesis of the cell wall peptidoglycan: transfers peptidoglycan precursor phospho-MurNAc-pentapeptide from UDP-MurNAc-pentapeptide onto the lipid carrier undecaprenyl phosphate, yielding undecaprenyl-pyrophosphoryl-MurNAc-pentapeptide, known as lipid I. The sequence is that of Phospho-N-acetylmuramoyl-pentapeptide-transferase from Rhodospirillum rubrum (strain ATCC 11170 / ATH 1.1.1 / DSM 467 / LMG 4362 / NCIMB 8255 / S1).